The sequence spans 1457 residues: Ras guanine nucleotide exchange factor C (1457 aa).

Residues 1–55 (MSVFTFGHGSNGALGLGKITDDTCPTPQKVNYFTEIDKRVKKVACGSYHTVFVTD) form an RCC1 1 repeat. 4 disordered regions span residues 75-196 (FYTS…PLLN), 209-264 (HYES…RINK), 282-313 (EQQQ…DEDP), and 376-404 (QQQL…SLQT). Composition is skewed to low complexity over residues 83-121 (TTTT…KIVN) and 134-158 (SNTT…LPPT). Basic and acidic residues-rich tracts occupy residues 171-188 (IKLD…ELIQ) and 209-224 (HYES…KDNE). The span at 225 to 237 (NENEEDEDDDDDD) shows a compositional bias: acidic residues. Residues 238-249 (STIRQNEDKESS) are compositionally biased toward basic and acidic residues. Low complexity-rich tracts occupy residues 283-292 (QQQQPQQPQQ) and 376-403 (QQQL…SSLQ). RCC1 repeat units follow at residues 351-401 (GGNV…SSSS), 432-483 (WGEL…CYTE), 485-549 (GKMY…VLTQ), and 590-647 (SGEV…ALVE). A DH domain is found at 650–971 (PKTKLALQLV…QVLLERMNQN (322 aa)). Residues 703–715 (LPPSLKGLSGGLP) show a composition bias toward low complexity. The segment at 703-762 (LPPSLKGLSGGLPDNANNTIKNGKDKDNHHNGDSNGHHSNGHYHGNGNNGNNSITTSNSI) is disordered. Residues 724-738 (NGKDKDNHHNGDSNG) are compositionally biased toward basic and acidic residues. A compositionally biased stretch (low complexity) spans 739 to 762 (HHSNGHYHGNGNNGNNSITTSNSI). Residues 989–1109 (GNPQIMGGSL…SVSQIKLQYF (121 aa)) enclose the N-terminal Ras-GEF domain. The tract at residues 1127–1210 (LTQNEITTPP…NNNNNNNNLT (84 aa)) is disordered. A coiled-coil region spans residues 1138-1211 (LQIQNNNQNN…NNNNNNNLTN (74 aa)). Low complexity predominate over residues 1142-1210 (NNNQNNNLEN…NNNNNNNNLT (69 aa)). One can recognise a Ras-GEF domain in the interval 1232-1454 (QPIEVAQTLT…DDKQAQKISS (223 aa)).

In terms of biological role, promotes the exchange of Ras-bound GDP by GTP. This chain is Ras guanine nucleotide exchange factor C (gefC), found in Dictyostelium discoideum (Social amoeba).